We begin with the raw amino-acid sequence, 238 residues long: Fmr1 neighbor protein (238 aa).

Residues 1–30 (MPSDRRPSQRRNRSKSRDYRGARSKVTRAD) form a disordered region. Residues 1-79 (MPSDRRPSQR…CLQYLWARRH (79 aa)) lie on the Cytoplasmic side of the membrane. Residues 15–30 (KSRDYRGARSKVTRAD) are compositionally biased toward basic and acidic residues. The helical transmembrane segment at 80 to 100 (LGLLLLLFWTLVILFRPVNTA) threads the bilayer. The Extracellular segment spans residues 101-178 (KLPILAEAAE…VRDKPTQVLR (78 aa)). A P-type domain is found at 118–176 (MLDFFFPTACIIRDNQVVVACNNQPYLSESECLKSKCCSSTSGTIIKCYAPVRDKPTQV). The chain crosses the membrane as a helical span at residues 179–199 (VFGLAAISILVLGFLPMCCCS). The Cytoplasmic segment spans residues 200-238 (MCWRRKRMNRMLKVLKKQKSKGKKPKGRKASEERALLSH). A compositionally biased stretch (basic residues) spans 214 to 227 (LKKQKSKGKKPKGR). The segment at 214–238 (LKKQKSKGKKPKGRKASEERALLSH) is disordered. Basic and acidic residues predominate over residues 228–238 (KASEERALLSH).

It localises to the membrane. The polypeptide is Fmr1 neighbor protein (Mus musculus (Mouse)).